The sequence spans 706 residues: Transmembrane 9 superfamily member 3 (706 aa).

Positions 1–33 (MRVRPKRSVITLMAIVVVMLILRNQFYSSRTRG) are cleaved as a signal peptide. The Lumenal portion of the chain corresponds to 34–290 (HGQEPVISSS…LSDEQSIQFH (257 aa)). A helical transmembrane segment spans residues 291-311 (WMSLANSVGIVLSISFITLII). The Cytoplasmic segment spans residues 312 to 371 (YVRVMYTDKSNSKSPKYMINIEGIETEDDLDDDKYGKYSVYTVAKDWIQNGRPNLFGLKV). The chain crosses the membrane as a helical span at residues 372 to 392 (LILLVSFGVQFLFTIIGSLTI). At 393–405 (SCSMNKLHNVRNS) the chain is on the lumenal side. Residues 406–426 (VLTMAILFFVLGAFMASFVGT) traverse the membrane as a helical segment. Residues 427–456 (RLSMVTKTKRTKANYLDDNRYLKDYKKFSP) lie on the Cytoplasmic side of the membrane. Residues 457–477 (IFTILCGSSLPGIVMVSTFLL) form a helical membrane-spanning segment. Residues 478–494 (NSIVWAHDSTSALPFKT) are Lumenal-facing. A helical transmembrane segment spans residues 495-515 (IVFFMSIYFIVCIPLSLFGGI). The Cytoplasmic portion of the chain corresponds to 516–553 (VANNIPLPQYWLSGITKDESNSDGNGLFVPKSRAKFNP). The helical transmembrane segment at 554–574 (LVYCGIYLCGIFPLLVIYVEM) threads the bilayer. Residues 575 to 592 (QYVYKSLWLEKTTFYYFY) are Lumenal-facing. The chain crosses the membrane as a helical span at residues 593–613 (GFLFLSIILLCVLTMEISIIG). The Cytoplasmic segment spans residues 614–637 (SYLLMRFCFEDKVVRNNWRWKCFE). The helical transmembrane segment at 638–658 (MGFSGGVYMELYSLYYIFAVL) threads the bilayer. Residues 659–665 (NIHGFSS) are Lumenal-facing. Residues 666–686 (ILISICYSLIFNVMCSLGLGA) traverse the membrane as a helical segment. Over 687 to 706 (LSYLTASWFINKIYHQKVNL) the chain is Cytoplasmic.

Belongs to the nonaspanin (TM9SF) (TC 9.A.2) family.

It is found in the golgi apparatus membrane. In terms of biological role, with EMP70 and TMN2, plays a critical role in the late stages of a nutrient-controlled pathway notably regulating FLO11 gene expression. Acts downstream of RAS2 and TOR. Essential for cell adhesion and filamentous growth. May play a role as effector of cellular copper homeostasis. The polypeptide is Transmembrane 9 superfamily member 3 (TMN3) (Saccharomyces cerevisiae (strain ATCC 204508 / S288c) (Baker's yeast)).